Reading from the N-terminus, the 208-residue chain is Glutathione S-transferase 1-1 (208 aa).

The GST N-terminal domain maps to 1–80 (MDFYYLPGSA…YLVEKYGKND (80 aa)). Glutathione contacts are provided by residues serine 9, 50–52 (HTI), and 64–66 (ESR). Residues 86–207 (CPKKRAVINQ…EGCLEFKKFF (122 aa)) form the GST C-terminal domain.

The protein belongs to the GST superfamily. Theta family. Homodimer.

The catalysed reaction is RX + glutathione = an S-substituted glutathione + a halide anion + H(+). In terms of biological role, conjugation of reduced glutathione to a wide number of exogenous and endogenous hydrophobic electrophiles. The polypeptide is Glutathione S-transferase 1-1 (GST1) (Lucilia cuprina (Green bottle fly)).